Here is a 28-residue protein sequence, read N- to C-terminus: Kappa-buthitoxin-Tt2b (28 aa).

3 cysteine pairs are disulfide-bonded: Cys2/Cys24, Cys7/Cys20, and Cys11/Cys26.

As to expression, expressed by the venom gland.

It localises to the secreted. Blocks potassium channels Shaker-IR (with inactivation domain removed) and hKv1.2/KCNA2. This Tityus trivittatus (Argentinean scorpion) protein is Kappa-buthitoxin-Tt2b.